Consider the following 262-residue polypeptide: Hydroxyethylthiazole kinase (262 aa).

A substrate-binding site is contributed by methionine 50. Residues arginine 125 and threonine 171 each contribute to the ATP site. Glycine 198 provides a ligand contact to substrate.

It belongs to the Thz kinase family. Mg(2+) serves as cofactor.

The catalysed reaction is 5-(2-hydroxyethyl)-4-methylthiazole + ATP = 4-methyl-5-(2-phosphooxyethyl)-thiazole + ADP + H(+). The protein operates within cofactor biosynthesis; thiamine diphosphate biosynthesis; 4-methyl-5-(2-phosphoethyl)-thiazole from 5-(2-hydroxyethyl)-4-methylthiazole: step 1/1. Functionally, catalyzes the phosphorylation of the hydroxyl group of 4-methyl-5-beta-hydroxyethylthiazole (THZ). The sequence is that of Hydroxyethylthiazole kinase from Shigella boydii serotype 18 (strain CDC 3083-94 / BS512).